Here is a 198-residue protein sequence, read N- to C-terminus: uncharacterized protein (198 aa).

Its subcellular location is the cytoplasm. This is an uncharacterized protein from Saccharomyces cerevisiae (strain ATCC 204508 / S288c) (Baker's yeast).